The primary structure comprises 347 residues: G-protein coupled receptor homolog U12 (347 aa).

Transmembrane regions (helical) follow at residues glycine 36–tyrosine 56, phenylalanine 67–threonine 87, leucine 103–threonine 124, isoleucine 147–threonine 167, isoleucine 194–isoleucine 214, and isoleucine 236–isoleucine 256. Cysteine 101 and cysteine 176 are oxidised to a cystine. The tract at residues glutamine 321–leucine 347 is disordered. The span at lysine 322–valine 341 shows a compositional bias: basic and acidic residues.

Belongs to the G-protein coupled receptor 1 family.

It is found in the membrane. Its function is as follows. Probable G-protein coupled receptor. This is G-protein coupled receptor homolog U12 (U12) from Homo sapiens (Human).